Here is a 148-residue protein sequence, read N- to C-terminus: Glutamyl-tRNA(Gln) amidotransferase subunit C, mitochondrial (148 aa).

This sequence belongs to the GatC family. Subunit of the heterotrimeric GatCAB amidotransferase (AdT) complex, composed of A, B and C subunits.

The protein localises to the mitochondrion. It catalyses the reaction L-glutamyl-tRNA(Gln) + L-glutamine + ATP + H2O = L-glutaminyl-tRNA(Gln) + L-glutamate + ADP + phosphate + H(+). Functionally, allows the formation of correctly charged Gln-tRNA(Gln) through the transamidation of misacylated Glu-tRNA(Gln) in the mitochondria. The reaction takes place in the presence of glutamine and ATP through an activated gamma-phospho-Glu-tRNA(Gln). The polypeptide is Glutamyl-tRNA(Gln) amidotransferase subunit C, mitochondrial (Drosophila yakuba (Fruit fly)).